The chain runs to 171 residues: MEIGQYQPNLEGDGLRIGIVQSRFNEPVCNGLADACVEELERLGVTGEDVLLVSVPGALEIPLALQKLAESGQFDALIALGAVIRGETYHFELVSNESGAGITRIGLDFNLPIANAVLTTENDEQAVARMTEKGRDAARVAVEMANLTMALDQLGDDEDEEEDEDDEEERA.

Residues Phe24, 58–60 (ALE), and 82–84 (AVI) contribute to the 5-amino-6-(D-ribitylamino)uracil site. (2S)-2-hydroxy-3-oxobutyl phosphate is bound at residue 87–88 (ET). His90 functions as the Proton donor in the catalytic mechanism. Asn115 lines the 5-amino-6-(D-ribitylamino)uracil pocket. Residue Arg129 participates in (2S)-2-hydroxy-3-oxobutyl phosphate binding. The tract at residues 150–171 (ALDQLGDDEDEEEDEDDEEERA) is disordered. The segment covering 154 to 171 (LGDDEDEEEDEDDEEERA) has biased composition (acidic residues).

The protein belongs to the DMRL synthase family.

It carries out the reaction (2S)-2-hydroxy-3-oxobutyl phosphate + 5-amino-6-(D-ribitylamino)uracil = 6,7-dimethyl-8-(1-D-ribityl)lumazine + phosphate + 2 H2O + H(+). Its pathway is cofactor biosynthesis; riboflavin biosynthesis; riboflavin from 2-hydroxy-3-oxobutyl phosphate and 5-amino-6-(D-ribitylamino)uracil: step 1/2. Catalyzes the formation of 6,7-dimethyl-8-ribityllumazine by condensation of 5-amino-6-(D-ribitylamino)uracil with 3,4-dihydroxy-2-butanone 4-phosphate. This is the penultimate step in the biosynthesis of riboflavin. The polypeptide is 6,7-dimethyl-8-ribityllumazine synthase (Burkholderia cenocepacia (strain HI2424)).